The primary structure comprises 360 residues: Polyamine aminopropyltransferase 2 (360 aa).

A PABS domain is found at 68-299; that stretch reads DIWDEISLKE…TDWGFHIAAN (232 aa). Position 94 (Gln94) interacts with S-methyl-5'-thioadenosine. The spermidine site is built by His123 and Asp147. Residues Asp167 and 201–202 contribute to the S-methyl-5'-thioadenosine site; that span reads DA. Asp219 acts as the Proton acceptor in catalysis.

The protein belongs to the spermidine/spermine synthase family. Homodimer or homotetramer.

The protein resides in the cytoplasm. It catalyses the reaction S-adenosyl 3-(methylsulfanyl)propylamine + putrescine = S-methyl-5'-thioadenosine + spermidine + H(+). The protein operates within amine and polyamine biosynthesis; spermidine biosynthesis; spermidine from putrescine: step 1/1. Catalyzes the irreversible transfer of a propylamine group from the amino donor S-adenosylmethioninamine (decarboxy-AdoMet) to putrescine (1,4-diaminobutane) to yield spermidine. This is Polyamine aminopropyltransferase 2 from Bacillus anthracis.